The primary structure comprises 362 residues: Peptide chain release factor 1 (362 aa).

The residue at position 237 (glutamine 237) is an N5-methylglutamine. The span at 284-295 (EEEKRQAEETST) shows a compositional bias: basic and acidic residues. The disordered stretch occupies residues 284–304 (EEEKRQAEETSTRRNLVASGD).

Belongs to the prokaryotic/mitochondrial release factor family. In terms of processing, methylated by PrmC. Methylation increases the termination efficiency of RF1.

It is found in the cytoplasm. Peptide chain release factor 1 directs the termination of translation in response to the peptide chain termination codons UAG and UAA. The polypeptide is Peptide chain release factor 1 (Pseudoalteromonas atlantica (strain T6c / ATCC BAA-1087)).